The primary structure comprises 112 residues: Protein FAM32A (112 aa).

Residues 23 to 58 (TKRKKKKKDKDKAKLLEAMGTSKKNEEEKRRGLDKR) are disordered. Residues 45 to 58 (KKNEEEKRRGLDKR) show a composition bias toward basic and acidic residues.

The protein belongs to the FAM32 family.

The protein localises to the nucleus. Functionally, may induce G2 arrest and apoptosis. May also increase cell sensitivity to apoptotic stimuli. The sequence is that of Protein FAM32A (FAM32A) from Bos taurus (Bovine).